The following is a 125-amino-acid chain: Small ribosomal subunit protein uS12 (125 aa).

Aspartate 89 bears the 3-methylthioaspartic acid mark. The interval 104–125 is disordered; sequence LQGVKDRKQSRSKYGSKRPKKA. Residues 113–125 show a composition bias toward basic residues; sequence SRSKYGSKRPKKA.

It belongs to the universal ribosomal protein uS12 family. Part of the 30S ribosomal subunit. Contacts proteins S8 and S17. May interact with IF1 in the 30S initiation complex.

In terms of biological role, with S4 and S5 plays an important role in translational accuracy. Interacts with and stabilizes bases of the 16S rRNA that are involved in tRNA selection in the A site and with the mRNA backbone. Located at the interface of the 30S and 50S subunits, it traverses the body of the 30S subunit contacting proteins on the other side and probably holding the rRNA structure together. The combined cluster of proteins S8, S12 and S17 appears to hold together the shoulder and platform of the 30S subunit. This chain is Small ribosomal subunit protein uS12, found in Leptothrix cholodnii (strain ATCC 51168 / LMG 8142 / SP-6) (Leptothrix discophora (strain SP-6)).